A 197-amino-acid polypeptide reads, in one-letter code: Adenylate kinase (197 aa).

Residue 16–21 (GAGKGT) coordinates ATP. Residues 36 to 65 (STGDILRDHVARGTALGQQAGPLMEAGQLV) form an NMP region. Residues threonine 37, arginine 42, 63–65 (QLV), 90–93 (GFPR), and glutamine 97 each bind AMP. An LID region spans residues 131–147 (DRGRQAVAEGRAPRADD). Arginine 132 provides a ligand contact to ATP. A disordered region spans residues 137 to 158 (VAEGRAPRADDNEETARKRQQV). Residues 141–153 (RAPRADDNEETAR) show a composition bias toward basic and acidic residues. AMP-binding residues include arginine 144 and arginine 155. ATP is bound at residue glycine 183.

Belongs to the adenylate kinase family. As to quaternary structure, monomer.

The protein resides in the cytoplasm. It carries out the reaction AMP + ATP = 2 ADP. It participates in purine metabolism; AMP biosynthesis via salvage pathway; AMP from ADP: step 1/1. Catalyzes the reversible transfer of the terminal phosphate group between ATP and AMP. Plays an important role in cellular energy homeostasis and in adenine nucleotide metabolism. The chain is Adenylate kinase from Deinococcus radiodurans (strain ATCC 13939 / DSM 20539 / JCM 16871 / CCUG 27074 / LMG 4051 / NBRC 15346 / NCIMB 9279 / VKM B-1422 / R1).